The sequence spans 198 residues: Ribose 1,5-bisphosphate phosphokinase PhnN (198 aa).

25–32 lines the ATP pocket; it reads GPSGAGKD.

It belongs to the ribose 1,5-bisphosphokinase family.

The enzyme catalyses alpha-D-ribose 1,5-bisphosphate + ATP = 5-phospho-alpha-D-ribose 1-diphosphate + ADP. It functions in the pathway metabolic intermediate biosynthesis; 5-phospho-alpha-D-ribose 1-diphosphate biosynthesis; 5-phospho-alpha-D-ribose 1-diphosphate from D-ribose 5-phosphate (route II): step 3/3. In terms of biological role, catalyzes the phosphorylation of ribose 1,5-bisphosphate to 5-phospho-D-ribosyl alpha-1-diphosphate (PRPP). The sequence is that of Ribose 1,5-bisphosphate phosphokinase PhnN from Bradyrhizobium diazoefficiens (strain JCM 10833 / BCRC 13528 / IAM 13628 / NBRC 14792 / USDA 110).